A 324-amino-acid chain; its full sequence is Adenine deaminase (324 aa).

Zn(2+) contacts are provided by His8, His10, and His186. Catalysis depends on Glu189, which acts as the Proton donor. Asp267 lines the Zn(2+) pocket. Asp268 is a substrate binding site.

Belongs to the metallo-dependent hydrolases superfamily. Adenosine and AMP deaminases family. Adenine deaminase type 2 subfamily. It depends on Zn(2+) as a cofactor.

It carries out the reaction adenine + H2O + H(+) = hypoxanthine + NH4(+). Its function is as follows. Catalyzes the hydrolytic deamination of adenine to hypoxanthine. Plays an important role in the purine salvage pathway and in nitrogen catabolism. The polypeptide is Adenine deaminase (Mesorhizobium japonicum (strain LMG 29417 / CECT 9101 / MAFF 303099) (Mesorhizobium loti (strain MAFF 303099))).